The sequence spans 298 residues: Transcription factor RHD6 (298 aa).

2 disordered regions span residues 1 to 58 and 157 to 213; these read MALV…SDHQ and TGSR…AKNR. A compositionally biased stretch (low complexity) spans 15–27; that stretch reads SKQNSSSSEDLSS. Polar residues-rich tracts occupy residues 157–168 and 177–190; these read TGSRNESLSPKS and GEST…SSGV. Positions 191–205 are enriched in low complexity; that stretch reads TGKTKPKPTTSPKDP. Residues 201-214 are basic motif; that stretch reads SPKDPQSLAAKNRR. Residues 201-250 form the bHLH domain; it reads SPKDPQSLAAKNRRERISERLKILQELVPNGTKVDLVTMLEKAISYVKFL. The tract at residues 215–250 is helix-loop-helix motif; it reads ERISERLKILQELVPNGTKVDLVTMLEKAISYVKFL.

Homodimer. Forms heterodimers with RSL1. Interacts with TIFY10B/JAZ2, TIFY6A/JAZ4, TIFY5A/JAZ8, TIFY7/JAZ9 and TIFY9/JAZ10. Expressed constitutively in flowers. Expressed in root epidermal hair cells.

The protein localises to the nucleus. Functionally, transcription factor that is specifically required for the development of root hairs. Acts with RSL1 to positively regulate root hair development. Acts downstream of genes that regulate epidermal pattern formation, such as GL2. Targets directly RSL4, another transcription factor involved in the regulation of root hair elongation. Acts with RSL1 as transcription factor that integrates a jasmonate (JA) signaling pathway that stimulates root hair growth. This Arabidopsis thaliana (Mouse-ear cress) protein is Transcription factor RHD6.